Reading from the N-terminus, the 279-residue chain is Pleckstrin homology domain-containing family F member 1 (279 aa).

The PH domain occupies valine 35–arginine 131. The segment at aspartate 152 to alanine 212 adopts an FYVE-type zinc-finger fold. Zn(2+) contacts are provided by cysteine 158, cysteine 161, cysteine 175, cysteine 178, cysteine 183, cysteine 186, cysteine 204, and cysteine 207. The segment at glutamate 219–glutamine 264 is disordered. The segment covering glycine 244 to arginine 253 has biased composition (acidic residues).

It is found in the nucleus. Its subcellular location is the cytoplasm. The protein localises to the perinuclear region. The protein resides in the lysosome. In terms of biological role, may induce apoptosis through the lysosomal-mitochondrial pathway. Translocates to the lysosome initiating the permeabilization of lysosomal membrane (LMP) and resulting in the release of CTSD and CTSL to the cytoplasm. Triggers the caspase-independent apoptosis by altering mitochondrial membrane permeabilization (MMP) resulting in the release of PDCD8. The sequence is that of Pleckstrin homology domain-containing family F member 1 (Plekhf1) from Rattus norvegicus (Rat).